The primary structure comprises 156 residues: ATP synthase subunit b (156 aa).

The chain crosses the membrane as a helical span at residues 7–29 (LFAQMVVFLVLAWFTMKFVWPPL).

Belongs to the ATPase B chain family. In terms of assembly, F-type ATPases have 2 components, F(1) - the catalytic core - and F(0) - the membrane proton channel. F(1) has five subunits: alpha(3), beta(3), gamma(1), delta(1), epsilon(1). F(0) has three main subunits: a(1), b(2) and c(10-14). The alpha and beta chains form an alternating ring which encloses part of the gamma chain. F(1) is attached to F(0) by a central stalk formed by the gamma and epsilon chains, while a peripheral stalk is formed by the delta and b chains.

Its subcellular location is the cell inner membrane. F(1)F(0) ATP synthase produces ATP from ADP in the presence of a proton or sodium gradient. F-type ATPases consist of two structural domains, F(1) containing the extramembraneous catalytic core and F(0) containing the membrane proton channel, linked together by a central stalk and a peripheral stalk. During catalysis, ATP synthesis in the catalytic domain of F(1) is coupled via a rotary mechanism of the central stalk subunits to proton translocation. Functionally, component of the F(0) channel, it forms part of the peripheral stalk, linking F(1) to F(0). In Burkholderia lata (strain ATCC 17760 / DSM 23089 / LMG 22485 / NCIMB 9086 / R18194 / 383), this protein is ATP synthase subunit b.